Consider the following 223-residue polypeptide: Keratin-associated protein 5-4 (223 aa).

14 repeat units span residues 21–24, 27–30, 79–82, 89–92, 107–110, 117–120, 135–138, 145–148, 155–158, 173–176, 183–186, 193–196, 203–206, and 213–216. The segment at 21–216 is 14 X 4 AA repeats of C-C-X-P; the sequence is CCKPVCCCVP…CCCQSSCCAP (196 aa).

This sequence belongs to the KRTAP type 5 family. In terms of assembly, interacts with hair keratins. In terms of tissue distribution, expressed during the active phases of the hair cycle in the medulla and the inner root sheath of the forming hair. Also expressed in the upper layers of the epidermis of skin.

Its function is as follows. In the hair cortex, hair keratin intermediate filaments are embedded in an interfilamentous matrix, consisting of hair keratin-associated protein (KRTAP), which are essential for the formation of a rigid and resistant hair shaft through their extensive disulfide bond cross-linking with abundant cysteine residues of hair keratins. The matrix proteins include the high-sulfur and high-glycine-tyrosine keratins. The chain is Keratin-associated protein 5-4 from Mus musculus (Mouse).